The primary structure comprises 125 residues: Glycine cleavage system H protein (125 aa).

Residues 23–103 (TALVGITDFA…PYNAWLIKMK (81 aa)) enclose the Lipoyl-binding domain. K64 bears the N6-lipoyllysine mark.

Belongs to the GcvH family. As to quaternary structure, the glycine cleavage system is composed of four proteins: P, T, L and H. (R)-lipoate is required as a cofactor.

The glycine cleavage system catalyzes the degradation of glycine. The H protein shuttles the methylamine group of glycine from the P protein to the T protein. This chain is Glycine cleavage system H protein, found in Chlorobium chlorochromatii (strain CaD3).